The following is a 221-amino-acid chain: MDHYVKMEDGKVMPIQEMLKSIERYNPEHLKVIEAYVEDQAKDNKYDLEANLACLKLYQFNPQMMNLDVTYTILLKSLTNFPHTDFVLCKCLLLPAQMNDDSVKEIVYLADILEKCDFTLFWSRVQKNPQFFKKITGFSESIRKFVCHVVGITFQSIEKQYLVRLLGDVDDKVLNAWVKKNGWKEEGEYILVAQQEGNIKTKHITEKIDFENLGPLMANCL.

The region spanning 46 to 207 (YDLEANLACL…NIKTKHITEK (162 aa)) is the PCI domain.

The protein belongs to the eIF-3 subunit K family. In terms of assembly, component of the eukaryotic translation initiation factor 3 (eIF-3) complex.

The protein localises to the cytoplasm. Functionally, component of the eukaryotic translation initiation factor 3 (eIF-3) complex, which is involved in protein synthesis of a specialized repertoire of mRNAs and, together with other initiation factors, stimulates binding of mRNA and methionyl-tRNAi to the 40S ribosome. The eIF-3 complex specifically targets and initiates translation of a subset of mRNAs involved in cell proliferation. This chain is Eukaryotic translation initiation factor 3 subunit K, found in Culex quinquefasciatus (Southern house mosquito).